The primary structure comprises 524 residues: MSQQVIIFDTTLRDGEQALQASLSVKEKIQIAMALERMGVDVMEVGFPVSSPGDFESVQTIARQIKNSRVCGLARCVDKDIDVAAEALRVAEAFRIHVFLATSTLHIESKLKRSFDEVLEMAIRSVKRARNYTDDVEFSCEDAGRTPIDNLCRVVEAAINAGATTINIPDTVGYTTPNQFGGIITTLYDRVPNIDKAIISVHCHDDLGMAVGNSIAAVQAGARQVEGTLNGIGERAGNTSLEEVIMAIKVRQDIMNVHTNINHQEIFRTSQIVSQLCNMPIPANKAIVGSNAFAHSSGIHQDGVLKNRENYEIMSPQTIGLKDVQLNLTSRSGRAAVKHRMEGMGYKEQDYNLDNLYAAFLKLADKKGQVFDYDLEALAFINKQQEEPEHFSLDYFSVQSGSSIMATASVKLICGEEEKAEAATGNGPVDAVYQAINRITGYPIELVKYQLTAKGQGRDALGQVDIVVSYNGRRFHGVGLATDIVESSAKAMVHVLNNIWRSQQVEKEKQRLQQSKHQNNQETV.

The Pyruvate carboxyltransferase domain maps to 5 to 267 (VIIFDTTLRD…HTNINHQEIF (263 aa)). Mn(2+)-binding residues include Asp-14, His-202, His-204, and Asn-238. Residues 392 to 524 (SLDYFSVQSG…SKHQNNQETV (133 aa)) form a regulatory domain region.

It belongs to the alpha-IPM synthase/homocitrate synthase family. LeuA type 1 subfamily. As to quaternary structure, homodimer. It depends on Mn(2+) as a cofactor.

Its subcellular location is the cytoplasm. It catalyses the reaction 3-methyl-2-oxobutanoate + acetyl-CoA + H2O = (2S)-2-isopropylmalate + CoA + H(+). It participates in amino-acid biosynthesis; L-leucine biosynthesis; L-leucine from 3-methyl-2-oxobutanoate: step 1/4. Catalyzes the condensation of the acetyl group of acetyl-CoA with 3-methyl-2-oxobutanoate (2-ketoisovalerate) to form 3-carboxy-3-hydroxy-4-methylpentanoate (2-isopropylmalate). This Serratia proteamaculans (strain 568) protein is 2-isopropylmalate synthase.